The primary structure comprises 255 residues: Tryptophan synthase alpha chain (255 aa).

Active-site proton acceptor residues include E42 and D53.

It belongs to the TrpA family. Tetramer of two alpha and two beta chains.

The enzyme catalyses (1S,2R)-1-C-(indol-3-yl)glycerol 3-phosphate + L-serine = D-glyceraldehyde 3-phosphate + L-tryptophan + H2O. The protein operates within amino-acid biosynthesis; L-tryptophan biosynthesis; L-tryptophan from chorismate: step 5/5. The alpha subunit is responsible for the aldol cleavage of indoleglycerol phosphate to indole and glyceraldehyde 3-phosphate. This is Tryptophan synthase alpha chain from Wolinella succinogenes (strain ATCC 29543 / DSM 1740 / CCUG 13145 / JCM 31913 / LMG 7466 / NCTC 11488 / FDC 602W) (Vibrio succinogenes).